The chain runs to 358 residues: NADH-quinone oxidoreductase subunit H (358 aa).

The next 8 membrane-spanning stretches (helical) occupy residues 20–40 (ITVG…IPLI), 95–115 (ALFY…WAVI), 128–148 (IGLL…IIAG), 168–188 (ISYE…SGSM), 206–226 (VFSW…ISAV), 253–273 (GFAF…ISAL), 290–310 (WGFI…AVLY), and 334–354 (VLIP…ISPL).

Belongs to the complex I subunit 1 family. In terms of assembly, NDH-1 is composed of 14 different subunits. Subunits NuoA, H, J, K, L, M, N constitute the membrane sector of the complex.

It localises to the cell inner membrane. It carries out the reaction a quinone + NADH + 5 H(+)(in) = a quinol + NAD(+) + 4 H(+)(out). Its function is as follows. NDH-1 shuttles electrons from NADH, via FMN and iron-sulfur (Fe-S) centers, to quinones in the respiratory chain. The immediate electron acceptor for the enzyme in this species is believed to be ubiquinone. Couples the redox reaction to proton translocation (for every two electrons transferred, four hydrogen ions are translocated across the cytoplasmic membrane), and thus conserves the redox energy in a proton gradient. This subunit may bind ubiquinone. The sequence is that of NADH-quinone oxidoreductase subunit H from Neisseria meningitidis serogroup C (strain 053442).